A 500-amino-acid chain; its full sequence is Cytochrome P450 2D28 (500 aa).

Cys446 is a binding site for heme.

It belongs to the cytochrome P450 family. It depends on heme as a cofactor.

The protein localises to the endoplasmic reticulum membrane. The protein resides in the microsome membrane. The polypeptide is Cytochrome P450 2D28 (CYP2D28A) (Mesocricetus auratus (Golden hamster)).